The chain runs to 377 residues: F-box protein At2g05970 (377 aa).

The F-box domain maps to 8 to 55 (ASWSELCPDVLRCVFELLSFSDLNRTRSVCSSWHSASRHCVPTQNQIP).

The sequence is that of F-box protein At2g05970 from Arabidopsis thaliana (Mouse-ear cress).